A 304-amino-acid chain; its full sequence is Nod factor export ATP-binding protein I (304 aa).

The ABC transporter domain occupies 6–236 (IEFDKVKKSY…EIGCDVIEIF (231 aa)). 38–45 (GPNGAGKT) contributes to the ATP binding site.

The protein belongs to the ABC transporter superfamily. Lipooligosaccharide exporter (TC 3.A.1.102) family. The complex is composed of two ATP-binding proteins (NodI) and two transmembrane proteins (NodJ).

The protein resides in the cell inner membrane. Part of the ABC transporter complex NodIJ involved in the export of the nodulation factors (Nod factors), the bacterial signal molecules that induce symbiosis and subsequent nodulation induction. Nod factors are LCO (lipo-chitin oligosaccharide), a modified beta-1,4-linked N-acetylglucosamine oligosaccharide. This subunit is responsible for energy coupling to the transport system. This chain is Nod factor export ATP-binding protein I, found in Paraburkholderia xenovorans (strain LB400).